The following is a 79-amino-acid chain: Small ribosomal subunit protein bS16c (79 aa).

Belongs to the bacterial ribosomal protein bS16 family.

The protein resides in the plastid. The protein localises to the chloroplast. This Trieres chinensis (Marine centric diatom) protein is Small ribosomal subunit protein bS16c.